A 79-amino-acid polypeptide reads, in one-letter code: Small ribosomal subunit protein uS17 (79 aa).

Belongs to the universal ribosomal protein uS17 family. As to quaternary structure, part of the 30S ribosomal subunit.

Its function is as follows. One of the primary rRNA binding proteins, it binds specifically to the 5'-end of 16S ribosomal RNA. In Rhizobium etli (strain CIAT 652), this protein is Small ribosomal subunit protein uS17.